The primary structure comprises 98 residues: MNLYDVIKKPVITEKSMIALEAGKYTFEVDTRAHKLLIKQAVEAAFDGVKVASVNTVNVKPKAKRVGRYTGFTSKTKKAIITLTADSKAIELFAAEAE.

It belongs to the universal ribosomal protein uL23 family. As to quaternary structure, part of the 50S ribosomal subunit. Contacts protein L29, and trigger factor when it is bound to the ribosome.

Functionally, one of the early assembly proteins it binds 23S rRNA. One of the proteins that surrounds the polypeptide exit tunnel on the outside of the ribosome. Forms the main docking site for trigger factor binding to the ribosome. In Streptococcus pyogenes serotype M1, this protein is Large ribosomal subunit protein uL23.